The sequence spans 436 residues: Trigger factor (436 aa).

One can recognise a PPIase FKBP-type domain in the interval 161–246 (GMRVTMDFVG…LNKVEEQILP (86 aa)).

This sequence belongs to the FKBP-type PPIase family. Tig subfamily.

The protein resides in the cytoplasm. The catalysed reaction is [protein]-peptidylproline (omega=180) = [protein]-peptidylproline (omega=0). Its function is as follows. Involved in protein export. Acts as a chaperone by maintaining the newly synthesized protein in an open conformation. Functions as a peptidyl-prolyl cis-trans isomerase. The protein is Trigger factor of Aeromonas hydrophila subsp. hydrophila (strain ATCC 7966 / DSM 30187 / BCRC 13018 / CCUG 14551 / JCM 1027 / KCTC 2358 / NCIMB 9240 / NCTC 8049).